A 129-amino-acid polypeptide reads, in one-letter code: Large ribosomal subunit protein bL17 (129 aa).

Belongs to the bacterial ribosomal protein bL17 family. As to quaternary structure, part of the 50S ribosomal subunit. Contacts protein L32.

This Yersinia enterocolitica serotype O:8 / biotype 1B (strain NCTC 13174 / 8081) protein is Large ribosomal subunit protein bL17.